The following is a 223-amino-acid chain: Octanoyltransferase (223 aa).

The BPL/LPL catalytic domain occupies 31–216 (GQIGDTLLLL…QIGEVFALEP (186 aa)). Residues 76–83 (RGGEVTYH), 145–147 (AIG), and 159–161 (GLA) each bind substrate. Cys-177 (acyl-thioester intermediate) is an active-site residue.

The protein belongs to the LipB family.

Its subcellular location is the cytoplasm. The catalysed reaction is octanoyl-[ACP] + L-lysyl-[protein] = N(6)-octanoyl-L-lysyl-[protein] + holo-[ACP] + H(+). It participates in protein modification; protein lipoylation via endogenous pathway; protein N(6)-(lipoyl)lysine from octanoyl-[acyl-carrier-protein]: step 1/2. In terms of biological role, catalyzes the transfer of endogenously produced octanoic acid from octanoyl-acyl-carrier-protein onto the lipoyl domains of lipoate-dependent enzymes. Lipoyl-ACP can also act as a substrate although octanoyl-ACP is likely to be the physiological substrate. This is Octanoyltransferase from Chloroflexus aurantiacus (strain ATCC 29366 / DSM 635 / J-10-fl).